Consider the following 205-residue polypeptide: 3-demethoxyubiquinol 3-hydroxylase (205 aa).

Residues Glu-54, Glu-84, His-87, Glu-136, Glu-168, and His-171 each coordinate Fe cation.

Belongs to the COQ7 family. It depends on Fe cation as a cofactor.

Its subcellular location is the cell membrane. The catalysed reaction is a 5-methoxy-2-methyl-3-(all-trans-polyprenyl)benzene-1,4-diol + AH2 + O2 = a 3-demethylubiquinol + A + H2O. Its pathway is cofactor biosynthesis; ubiquinone biosynthesis. Catalyzes the hydroxylation of 2-nonaprenyl-3-methyl-6-methoxy-1,4-benzoquinol during ubiquinone biosynthesis. The chain is 3-demethoxyubiquinol 3-hydroxylase from Paracidovorax citrulli (strain AAC00-1) (Acidovorax citrulli).